A 349-amino-acid chain; its full sequence is Isopentenyl-diphosphate delta-isomerase (349 aa).

Position 6–7 (6–7) interacts with substrate; it reads RK. FMN-binding positions include 62–64, S93, and N122; that span reads AMT. Q152 is a substrate binding site. E153 provides a ligand contact to Mg(2+). FMN-binding positions include K184, T214, 258–259, and 280–281; these read GG and AG.

The protein belongs to the IPP isomerase type 2 family. Homooctamer. Dimer of tetramers. Requires FMN as cofactor. NADPH is required as a cofactor. The cofactor is Mg(2+).

It is found in the cytoplasm. It catalyses the reaction isopentenyl diphosphate = dimethylallyl diphosphate. Involved in the biosynthesis of isoprenoids. Catalyzes the 1,3-allylic rearrangement of the homoallylic substrate isopentenyl (IPP) to its allylic isomer, dimethylallyl diphosphate (DMAPP). The protein is Isopentenyl-diphosphate delta-isomerase of Bacillus cereus (strain AH820).